A 328-amino-acid polypeptide reads, in one-letter code: tRNA dimethylallyltransferase (328 aa).

An ATP-binding site is contributed by 23–30 (GPTASGKS). 25-30 (TASGKS) contributes to the substrate binding site. Residues 48 to 51 (DSMQ) are interaction with substrate tRNA.

This sequence belongs to the IPP transferase family. Monomer. Mg(2+) is required as a cofactor.

The enzyme catalyses adenosine(37) in tRNA + dimethylallyl diphosphate = N(6)-dimethylallyladenosine(37) in tRNA + diphosphate. Functionally, catalyzes the transfer of a dimethylallyl group onto the adenine at position 37 in tRNAs that read codons beginning with uridine, leading to the formation of N6-(dimethylallyl)adenosine (i(6)A). The sequence is that of tRNA dimethylallyltransferase from Rhodopseudomonas palustris (strain BisA53).